A 312-amino-acid polypeptide reads, in one-letter code: Lichenase-2 (312 aa).

Positions 1 to 6 (PPSVES) are cleaved as a signal peptide. Catalysis depends on Glu99, which acts as the Proton donor. Residue Asn196 is glycosylated (N-linked (GlcNAc...) asparagine). The Nucleophile role is filled by Glu238.

It belongs to the glycosyl hydrolase 17 family.

The catalysed reaction is Hydrolysis of (1-&gt;4)-beta-D-glucosidic linkages in beta-D-glucans containing (1-&gt;3)- and (1-&gt;4)-bonds.. Its pathway is glycan metabolism; beta-D-glucan degradation. Its function is as follows. Functions in plant cell wall hydrolysis during mobilization of the endosperm in germinating grain or during the growth of vegetative tissues. This Hordeum vulgare (Barley) protein is Lichenase-2.